A 282-amino-acid polypeptide reads, in one-letter code: Putative lactoylglutathione lyase (282 aa).

An N-acetylalanine modification is found at alanine 2. VOC domains lie at 17–141 and 147–274; these read RFLH…LIQR and PLCQ…LVDN. Residue histidine 20 participates in Zn(2+) binding. Arginine 24 contacts substrate. Glutamate 71 is a Zn(2+) binding site. 2 residues coordinate substrate: asparagine 75 and histidine 89. Zn(2+) contacts are provided by histidine 89 and glutamate 137. Glutamate 137 (proton donor/acceptor) is an active-site residue. 254–255 is a substrate binding site; the sequence is LG.

It belongs to the glyoxalase I family. Requires Zn(2+) as cofactor.

It catalyses the reaction (R)-S-lactoylglutathione = methylglyoxal + glutathione. Its pathway is secondary metabolite metabolism; methylglyoxal degradation; (R)-lactate from methylglyoxal: step 1/2. Its function is as follows. Catalyzes the conversion of hemimercaptal, formed from methylglyoxal and glutathione, to S-lactoylglutathione. The protein is Putative lactoylglutathione lyase of Brassica oleracea var. gemmifera (Brussel sprouts).